The sequence spans 78 residues: Antitoxin FitA (78 aa).

In terms of assembly, homodimer in the absence of FitB; forms a heterodimer with FitB; 4 FitAB heterodimers form a complex that binds to fitAB promoter DNA. The complex is also seen in solution.

Functionally, antitoxin component of a type II toxin-antitoxin (TA) system. Plays a role in the speed with which bacteria traverse human epithelial cells; disruption of the locus increases the speed of trafficking about 2-4-fold. Binds to its own promoter, binding affinity of the FitAB complex is 20-30-fold higher than FitA alone. No nuclease activity was observed for the FitAB complex, perhaps because FitA (the antitoxin) prevents metal binding and thus catalysis by FitB. The protein is Antitoxin FitA (fitA) of Neisseria gonorrhoeae (strain ATCC 700825 / FA 1090).